Reading from the N-terminus, the 666-residue chain is Envelope glycoprotein (666 aa).

The N-terminal stretch at methionine 1–glycine 33 is a signal peptide. The interval alanine 31–proline 264 is receptor-binding domain (RBD). The Extracellular portion of the chain corresponds to lysine 34–leucine 607. An N-linked (GlcNAc...) asparagine; by host glycan is attached at asparagine 42. Cystine bridges form between cysteine 76–cysteine 127, cysteine 102–cysteine 116, cysteine 103–cysteine 112, cysteine 150–cysteine 170, and cysteine 162–cysteine 175. Zn(2+) is bound at residue aspartate 115. An N-linked (GlcNAc...) asparagine; by host glycan is attached at asparagine 197. Cysteine 207 and cysteine 213 are disulfide-bonded. The interval isoleucine 265–aspartate 310 is disordered. Positions proline 287 to alanine 299 are enriched in polar residues. Asparagine 290 and asparagine 324 each carry an N-linked (GlcNAc...) asparagine; by host glycan. 5 cysteine pairs are disulfide-bonded: cysteine 334/cysteine 337, cysteine 334/cysteine 560, cysteine 364/cysteine 417, cysteine 424/cysteine 437, and cysteine 552/cysteine 560. A CXXC motif is present at residues cysteine 334–cysteine 337. Asparagine 356 and asparagine 363 each carry an N-linked (GlcNAc...) asparagine; by host glycan. The segment at threonine 378–glycine 399 is disordered. Asparagine 431 carries N-linked (GlcNAc...) asparagine; by host glycosylation. The interval valine 469–valine 489 is fusion peptide. Positions glutamine 500–valine 534 form a coiled coil. The interval leucine 535–leucine 551 is immunosuppression. A CX6CC motif is present at residues cysteine 552–cysteine 560. Residues isoleucine 608–isoleucine 628 traverse the membrane as a helical segment. Cysteine 627 is lipidated: S-palmitoyl cysteine; by host. Over leucine 629–lysine 666 the chain is Cytoplasmic. Residues tyrosine 652–leucine 655 carry the YXXL motif; contains endocytosis signal motif.

The mature envelope protein (Env) consists of a trimer of SU-TM heterodimers attached by a labile interchain disulfide bond. Specific enzymatic cleavages in vivo yield mature proteins. Envelope glycoproteins are synthesized as an inactive precursor that is N-glycosylated and processed likely by host cell furin or by a furin-like protease in the Golgi to yield the mature SU and TM proteins. The cleavage site between SU and TM requires the minimal sequence [KR]-X-[KR]-R. The R-peptide is released from the C-terminus of the cytoplasmic tail of the TM protein upon particle formation as a result of proteolytic cleavage by the viral protease. Cleavage of this peptide is required for TM to become fusogenic. Post-translationally, the CXXC motif is highly conserved across a broad range of retroviral envelope proteins. It is thought to participate in the formation of a labile disulfide bond possibly with the CX6CC motif present in the transmembrane protein. Isomerization of the intersubunit disulfide bond to an SU intrachain disulfide bond is thought to occur upon receptor recognition in order to allow membrane fusion. In terms of processing, the transmembrane protein is palmitoylated. The R-peptide is palmitoylated.

The protein localises to the virion membrane. It localises to the host cell membrane. In terms of biological role, the surface protein (SU) attaches the virus to the host cell by binding to its receptor. This interaction triggers the refolding of the transmembrane protein (TM) and is thought to activate its fusogenic potential by unmasking its fusion peptide. Fusion occurs at the host cell plasma membrane. The transmembrane protein (TM) acts as a class I viral fusion protein. Under the current model, the protein has at least 3 conformational states: pre-fusion native state, pre-hairpin intermediate state, and post-fusion hairpin state. During viral and target cell membrane fusion, the coiled coil regions (heptad repeats) assume a trimer-of-hairpins structure, positioning the fusion peptide in close proximity to the C-terminal region of the ectodomain. The formation of this structure appears to drive apposition and subsequent fusion of viral and target cell membranes. Membranes fusion leads to delivery of the nucleocapsid into the cytoplasm. This chain is Envelope glycoprotein (env), found in Hortulanus murine leukemia virus (HoMuLV).